Reading from the N-terminus, the 144-residue chain is Bacilliredoxin SSP1311 (144 aa).

Belongs to the bacilliredoxin family.

This Staphylococcus saprophyticus subsp. saprophyticus (strain ATCC 15305 / DSM 20229 / NCIMB 8711 / NCTC 7292 / S-41) protein is Bacilliredoxin SSP1311.